The sequence spans 712 residues: Polyribonucleotide nucleotidyltransferase (712 aa).

The Mg(2+) site is built by D487 and D493. The KH domain maps to 554–613; it reads PRIEVMNIPVDKIREVIGSGGKVIREIVEKTGAKINIEDDGTVKIASSSGKEIEAARKWI. The region spanning 623–691 is the S1 motif domain; sequence GQIYEGTVVK…ERGKVRLSMK (69 aa).

It belongs to the polyribonucleotide nucleotidyltransferase family. Mg(2+) serves as cofactor.

It localises to the cytoplasm. It carries out the reaction RNA(n+1) + phosphate = RNA(n) + a ribonucleoside 5'-diphosphate. In terms of biological role, involved in mRNA degradation. Catalyzes the phosphorolysis of single-stranded polyribonucleotides processively in the 3'- to 5'-direction. This chain is Polyribonucleotide nucleotidyltransferase, found in Rhizobium etli (strain CIAT 652).